A 366-amino-acid chain; its full sequence is Chorismate synthase (366 aa).

Residue Arg48 coordinates NADP(+). Residues 125–127, 238–239, Gly278, 293–297, and Arg319 contribute to the FMN site; these read RSS, NA, and KPTSS.

Belongs to the chorismate synthase family. In terms of assembly, homotetramer. Requires FMNH2 as cofactor.

The enzyme catalyses 5-O-(1-carboxyvinyl)-3-phosphoshikimate = chorismate + phosphate. It participates in metabolic intermediate biosynthesis; chorismate biosynthesis; chorismate from D-erythrose 4-phosphate and phosphoenolpyruvate: step 7/7. Catalyzes the anti-1,4-elimination of the C-3 phosphate and the C-6 proR hydrogen from 5-enolpyruvylshikimate-3-phosphate (EPSP) to yield chorismate, which is the branch point compound that serves as the starting substrate for the three terminal pathways of aromatic amino acid biosynthesis. This reaction introduces a second double bond into the aromatic ring system. The protein is Chorismate synthase of Alkalilimnicola ehrlichii (strain ATCC BAA-1101 / DSM 17681 / MLHE-1).